Consider the following 359-residue polypeptide: Holliday junction branch migration complex subunit RuvB (359 aa).

The interval 1–187 (MSGLEHGDAS…FGFTAHLEFY (187 aa)) is large ATPase domain (RuvB-L). Residues Leu-26, Arg-27, Gly-68, Lys-71, Thr-72, Thr-73, 134–136 (EDY), Arg-177, Tyr-187, and Arg-224 each bind ATP. Residue Thr-72 coordinates Mg(2+). Residues 188–257 (ETHELEQVIE…SVRAALDLYD (70 aa)) form a small ATPAse domain (RuvB-S) region. The segment at 260–359 (PLGLDRLDRA…VAGALFGDEL (100 aa)) is head domain (RuvB-H). DNA is bound by residues Arg-315 and Arg-320.

It belongs to the RuvB family. Homohexamer. Forms an RuvA(8)-RuvB(12)-Holliday junction (HJ) complex. HJ DNA is sandwiched between 2 RuvA tetramers; dsDNA enters through RuvA and exits via RuvB. An RuvB hexamer assembles on each DNA strand where it exits the tetramer. Each RuvB hexamer is contacted by two RuvA subunits (via domain III) on 2 adjacent RuvB subunits; this complex drives branch migration. In the full resolvosome a probable DNA-RuvA(4)-RuvB(12)-RuvC(2) complex forms which resolves the HJ.

The protein resides in the cytoplasm. The catalysed reaction is ATP + H2O = ADP + phosphate + H(+). Functionally, the RuvA-RuvB-RuvC complex processes Holliday junction (HJ) DNA during genetic recombination and DNA repair, while the RuvA-RuvB complex plays an important role in the rescue of blocked DNA replication forks via replication fork reversal (RFR). RuvA specifically binds to HJ cruciform DNA, conferring on it an open structure. The RuvB hexamer acts as an ATP-dependent pump, pulling dsDNA into and through the RuvAB complex. RuvB forms 2 homohexamers on either side of HJ DNA bound by 1 or 2 RuvA tetramers; 4 subunits per hexamer contact DNA at a time. Coordinated motions by a converter formed by DNA-disengaged RuvB subunits stimulates ATP hydrolysis and nucleotide exchange. Immobilization of the converter enables RuvB to convert the ATP-contained energy into a lever motion, pulling 2 nucleotides of DNA out of the RuvA tetramer per ATP hydrolyzed, thus driving DNA branch migration. The RuvB motors rotate together with the DNA substrate, which together with the progressing nucleotide cycle form the mechanistic basis for DNA recombination by continuous HJ branch migration. Branch migration allows RuvC to scan DNA until it finds its consensus sequence, where it cleaves and resolves cruciform DNA. The chain is Holliday junction branch migration complex subunit RuvB from Clavibacter michiganensis subsp. michiganensis (strain NCPPB 382).